The primary structure comprises 281 residues: Proline iminopeptidase PfmaB (281 aa).

The AB hydrolase-1 domain maps to 23-267 (PLVITLHGGR…NANHSVHVEK (245 aa)).

It belongs to the peptidase S33 family.

The enzyme catalyses Release of N-terminal proline from a peptide.. Functionally, proline iminopeptidase; part of the gene cluster that mediates the biosynthesis of dihydroxynaphthalene (DHN)-melanin, a bluish-green pigment forming a dark layer in the conidial wall that protects the conidia from UV radiations. The first step of the pathway is the production of the pentaketide 1,3,6,8-tetrahydroxynaphthalene (1,3,6,8-THN or T4HN) by the polyketide synthase PfmaE though condensation of acetyl-CoA with malonyl-CoA. T4HN is not stable and easily oxidizes into the stable form flaviolin. T4HN is also substrate of the hydroxynaphthalene reductase PfmaG to yield scytalone. The scytalone dehydratase PfmaJ then reduces scytalone to 1,3,8-THN. 1,3,8-THN is then substrate of the hydroxynaphthalene reductase PfmaI to yield vermelone. Vermelone is further converted by the multicopper oxidase PfmaD to 1,8-DHN. Finally the laccase PFICI_06862 transforms 1,8-DHN to DHN-melanin. The roles of the 5-oxoprolinase PfmaA and the proline iminopeptidase PfmaB within the cluster have not been elucidated yet. The chain is Proline iminopeptidase PfmaB from Pestalotiopsis fici (strain W106-1 / CGMCC3.15140).